Reading from the N-terminus, the 607-residue chain is Elongation factor 4 (607 aa).

Residues 6–188 enclose the tr-type G domain; it reads SRIRNFSIIA…AIVARIPPPR (183 aa). GTP is bound by residues 18-23 and 135-138; these read DHGKST and NKID.

It belongs to the TRAFAC class translation factor GTPase superfamily. Classic translation factor GTPase family. LepA subfamily.

It localises to the cell inner membrane. It carries out the reaction GTP + H2O = GDP + phosphate + H(+). Its function is as follows. Required for accurate and efficient protein synthesis under certain stress conditions. May act as a fidelity factor of the translation reaction, by catalyzing a one-codon backward translocation of tRNAs on improperly translocated ribosomes. Back-translocation proceeds from a post-translocation (POST) complex to a pre-translocation (PRE) complex, thus giving elongation factor G a second chance to translocate the tRNAs correctly. Binds to ribosomes in a GTP-dependent manner. The sequence is that of Elongation factor 4 from Sphingopyxis alaskensis (strain DSM 13593 / LMG 18877 / RB2256) (Sphingomonas alaskensis).